An 875-amino-acid polypeptide reads, in one-letter code: Protein HIR2 (875 aa).

WD repeat units follow at residues 10–47 (IHNEQVNALAALGPYIILAGSGGHVMAWRQQQLVDTAF), 118–158 (KSPS…KLSE), 163–201 (KASKPITGIIDPTGQTFTVMTSDRSILVYQINKTGTHKL), 237–277 (PNNA…PAFY), 278–316 (EKPNLKKGTSTRYNLIATSGSTDGTILVWNTKRMKPLFN), and 320–359 (VSSTAINDMSWSQDGFTLFAISNDATLYTFAFQEKDLGVA). The interval 398 to 473 (ESASAAPIPN…IAPGSKKQKK (76 aa)) is disordered. The segment covering 424–446 (ANNQTNGIKTIQSTSMEFNTPSY) has biased composition (polar residues). WD repeat units follow at residues 546-587 (LFQD…LMAP) and 589-626 (VLGVSISFLEACGTYLLCLTSIGELYCWNIEQKKLAFP). At serine 713 the chain carries Phosphoserine.

Belongs to the WD repeat HIR1 family. As to quaternary structure, component of the HIR complex, composed of HIR1, HIR2, HIR3 and HPC2. This complex may consist of one copy of HIR1 and HIR3 and two copies of HIR2 and HPC2. The HIR complex interacts with ASF1. Interacts with SNF2. Interacts with SNF5. Interacts with SWI3. Interacts with RTT106.

The protein localises to the nucleus. Its subcellular location is the chromosome. Functionally, component of the HIR complex, which cooperates with ASF1 to promote replication-independent chromatin assembly. The HIR complex is also required for the periodic repression of three of the four histone gene loci during the cell cycle as well as for autogenous regulation of the HTA1-HTB1 locus by H2A and H2B. DNA-binding by the HIR complex may repress transcription by inhibiting nucleosome remodeling by the SWI/SNF complex. The HIR complex may also be required for transcriptional silencing of centromeric, telomeric and mating-type loci in the absence of CAF-1. The chain is Protein HIR2 (HIR2) from Saccharomyces cerevisiae (strain ATCC 204508 / S288c) (Baker's yeast).